We begin with the raw amino-acid sequence, 257 residues long: Aspartate/glutamate leucyltransferase (257 aa).

This sequence belongs to the R-transferase family. Bpt subfamily.

The protein localises to the cytoplasm. The enzyme catalyses N-terminal L-glutamyl-[protein] + L-leucyl-tRNA(Leu) = N-terminal L-leucyl-L-glutamyl-[protein] + tRNA(Leu) + H(+). It catalyses the reaction N-terminal L-aspartyl-[protein] + L-leucyl-tRNA(Leu) = N-terminal L-leucyl-L-aspartyl-[protein] + tRNA(Leu) + H(+). Its function is as follows. Functions in the N-end rule pathway of protein degradation where it conjugates Leu from its aminoacyl-tRNA to the N-termini of proteins containing an N-terminal aspartate or glutamate. The protein is Aspartate/glutamate leucyltransferase of Rhodopseudomonas palustris (strain HaA2).